The following is a 262-amino-acid chain: Aminoglycoside (3'') (9) adenylyltransferase (262 aa).

Positions 1 to 157 are adenylyltransferase domain; sequence MTLSIPPSIQ…ERAERLFTPA (157 aa). Residues Ser-36, Ser-46, and Asp-47 each coordinate ATP. Mg(2+) is bound by residues Asp-47, Asp-49, and Glu-87. Catalysis depends on Glu-87, which acts as the Proton acceptor. An ATP-binding site is contributed by Asp-130. The helical domain stretch occupies residues 158–262; sequence PAAQLLKALR…AKAHIPTQFT (105 aa). Residues 173 to 178 and His-185 each bind streptomycin; that span reads WQSTAD. ATP contacts are provided by Lys-205 and Tyr-231.

Monomer.

It carries out the reaction streptomycin + ATP = 3''-O-adenylylstreptomycin + diphosphate. The catalysed reaction is spectinomycin + ATP = 9-O-adenylylspectinomycin + diphosphate. In terms of biological role, mediates bacterial resistance to the antibiotics streptomycin and spectinomycin, does not confer resistance to kanamycin. Binds ATP first, then antibiotic. This is Aminoglycoside (3'') (9) adenylyltransferase (aadA) from Salmonella typhimurium (strain LT2 / SGSC1412 / ATCC 700720).